The following is a 190-amino-acid chain: GTP cyclohydrolase 1 (190 aa).

Zn(2+)-binding residues include Cys-75, His-78, and Cys-146.

This sequence belongs to the GTP cyclohydrolase I family. As to quaternary structure, toroid-shaped homodecamer, composed of two pentamers of five dimers.

It carries out the reaction GTP + H2O = 7,8-dihydroneopterin 3'-triphosphate + formate + H(+). It participates in cofactor biosynthesis; 7,8-dihydroneopterin triphosphate biosynthesis; 7,8-dihydroneopterin triphosphate from GTP: step 1/1. This is GTP cyclohydrolase 1 from Campylobacter jejuni subsp. jejuni serotype O:23/36 (strain 81-176).